We begin with the raw amino-acid sequence, 311 residues long: Olfactory receptor 2M4 (311 aa).

The Extracellular portion of the chain corresponds to 1–25 (MVWENQTFNSIFILLGIFNHSPTHT). The N-linked (GlcNAc...) asparagine glycan is linked to N5. Residues 26–49 (FLFSLVLGIFSLALMENISMVLLI) form a helical membrane-spanning segment. The Cytoplasmic segment spans residues 50–57 (YIEKQLHT). The chain crosses the membrane as a helical span at residues 58-79 (PMYFLLSQLSLMDLMLICTTLP). The Extracellular segment spans residues 80-100 (KMIFSYLSGKKSISLAGCGTQ). C97 and C189 are oxidised to a cystine. The chain crosses the membrane as a helical span at residues 101–120 (IFFYVSLLGAECFLLAVMAY). Residues 121–139 (DRYVAICHPLQYTILMNPK) lie on the Cytoplasmic side of the membrane. Residues 140 to 158 (LCVFMTVASWTLGSLDGII) traverse the membrane as a helical segment. Residues 159 to 195 (VLAAVLSFSYCSSLEIHHFFCDVAALLPLSCTETSAF) lie on the Extracellular side of the membrane. The helical transmembrane segment at 196–219 (ERLLVICCVVMLIFPVSVIILSYS) threads the bilayer. Over 220–236 (HVLRAVIHMGSGESRRK) the chain is Cytoplasmic. A helical membrane pass occupies residues 237-259 (AFTTCSSHLSVVGLYYGAAMFMY). At 260–272 (MRPASKHTPDQDK) the chain is on the extracellular side. The chain crosses the membrane as a helical span at residues 273 to 292 (MVSAFYTILTPMLNPLIYSL). At 293–311 (RNKEVFRALQKVLKKRKLI) the chain is on the cytoplasmic side.

This sequence belongs to the G-protein coupled receptor 1 family.

Its subcellular location is the cell membrane. Its function is as follows. Odorant receptor. The chain is Olfactory receptor 2M4 (OR2M4) from Homo sapiens (Human).